The following is a 1465-amino-acid chain: Protein clueless (1465 aa).

The interval 1–87 is disordered; it reads MALEIDAKNA…SNGHSENGDA (87 aa). Low complexity predominate over residues 30 to 51; it reads HNNNNNAPAAGEKNLVNGSSAA. Over residues 52–61 the composition is skewed to basic residues; the sequence is TKKKGKKNRN. A Phosphoserine modification is found at S273. One can recognise a Clu domain in the interval 427-669; the sequence is RAEDAFSSKL…RTFPPDVNFL (243 aa). Residues 742–767 are compositionally biased toward basic and acidic residues; it reads AEKQEEPNEEQPEKTEEQPAEKEESK. Disordered regions lie at residues 742–776 and 962–1021; these read AEKQ…TKSA and VSSD…SNSD. Positions 970-986 are enriched in basic residues; sequence KQPRNNSGKHNKHKAAK. Low complexity-rich tracts occupy residues 987–1003 and 1010–1020; these read ASKP…ATAA and ATTSGATSSNS. TPR repeat units lie at residues 1114 to 1147, 1240 to 1273, and 1275 to 1308; these read AYNF…LNNV, ALID…NLKY, and GNKA…EKET. A disordered region spans residues 1428 to 1465; that stretch reads NNNDNASETEQPKDEASAAGTPTQLTNGSEESTATVSS. Residues 1447 to 1465 show a composition bias toward polar residues; that stretch reads GTPTQLTNGSEESTATVSS.

Belongs to the CLU family.

It localises to the cytoplasm. Functionally, mRNA-binding protein involved in proper cytoplasmic distribution of mitochondria. The sequence is that of Protein clueless from Drosophila virilis (Fruit fly).